The chain runs to 308 residues: Dihydroorotate dehydrogenase A (fumarate) (308 aa).

FMN contacts are provided by residues serine 24 and lysine 48–serine 49. Substrate-binding positions include lysine 48, asparagine 72–leucine 76, and asparagine 132. Asparagine 132 provides a ligand contact to FMN. The Nucleophile role is filled by cysteine 135. Positions 171 and 197 each coordinate FMN. Asparagine 198–threonine 199 serves as a coordination point for substrate. FMN contacts are provided by residues glycine 223 and glycine 249 to glycine 250.

This sequence belongs to the dihydroorotate dehydrogenase family. Type 1 subfamily. Homodimer. The cofactor is FMN.

It is found in the cytoplasm. It carries out the reaction (S)-dihydroorotate + fumarate = orotate + succinate. Its pathway is pyrimidine metabolism; UMP biosynthesis via de novo pathway. Its function is as follows. Catalyzes the conversion of dihydroorotate to orotate with fumarate as the electron acceptor. This is Dihydroorotate dehydrogenase A (fumarate) (pyrD) from Limosilactobacillus reuteri (strain DSM 20016) (Lactobacillus reuteri).